The sequence spans 304 residues: Tyrosine recombinase XerC (304 aa).

One can recognise a Core-binding (CB) domain in the interval 2-88 (ANVKNFLTLF…ALRSFYKFLL (87 aa)). The Tyr recombinase domain maps to 109-294 (RIPKFLYEKE…SKDMLRKTYM (186 aa)). Residues Arg149, Lys173, His246, Arg249, and His272 contribute to the active site. Tyr281 functions as the O-(3'-phospho-DNA)-tyrosine intermediate in the catalytic mechanism.

This sequence belongs to the 'phage' integrase family. XerC subfamily. In terms of assembly, forms a cyclic heterotetrameric complex composed of two molecules of XerC and two molecules of XerD.

The protein resides in the cytoplasm. Functionally, site-specific tyrosine recombinase, which acts by catalyzing the cutting and rejoining of the recombining DNA molecules. The XerC-XerD complex is essential to convert dimers of the bacterial chromosome into monomers to permit their segregation at cell division. It also contributes to the segregational stability of plasmids. In Bacillus licheniformis (strain ATCC 14580 / DSM 13 / JCM 2505 / CCUG 7422 / NBRC 12200 / NCIMB 9375 / NCTC 10341 / NRRL NRS-1264 / Gibson 46), this protein is Tyrosine recombinase XerC.